Consider the following 668-residue polypeptide: Neurexin-3-beta (668 aa).

The first 35 residues, 1-35, serve as a signal peptide directing secretion; that stretch reads MHLRTNPSICPGRRPAWTLWMCSLFWGCIVSSVWS. Topologically, residues 36-593 are extracellular; the sequence is SSNVASSASS…EVVRESSSTT (558 aa). The 201-residue stretch at 84–284 folds into the Laminin G-like domain; sequence ATYIFGKSGG…NPNIKINGSV (201 aa). Residues 510-529 form a disordered region; it reads TASSSTGMVPKLPAGKMNNR. Residues 594–614 form a helical membrane-spanning segment; the sequence is GMVVGIVAAAALCILILLYAM. Residues 615-668 are Cytoplasmic-facing; sequence YKYRNRDEGSYQVDETRNYISNSAQSNGTLMKEKQQSSKSGHKKQKNKDKEYYV. A disordered region spans residues 636–668; the sequence is NSAQSNGTLMKEKQQSSKSGHKKQKNKDKEYYV.

It belongs to the neurexin family. In terms of processing, processed by alpha-secretase leading to the formation of an extracellular soluble protein as well as a C-terminal membrane-embedded fragment (CTF). Proteolysis of these CTFs by gamma-secretase releases intracellular domains (ICDs) and extracellular peptides. As to expression, brain and arteries (at protein level).

The protein localises to the membrane. Functionally, neuronal cell surface protein that may be involved in cell recognition and cell adhesion. Plays a role in angiogenesis. The sequence is that of Neurexin-3-beta (NRXN3) from Gallus gallus (Chicken).